Here is a 179-residue protein sequence, read N- to C-terminus: Large ribosomal subunit protein uL5 (179 aa).

The protein belongs to the universal ribosomal protein uL5 family. As to quaternary structure, part of the 50S ribosomal subunit; part of the 5S rRNA/L5/L18/L25 subcomplex. Contacts the 5S rRNA and the P site tRNA. Forms a bridge to the 30S subunit in the 70S ribosome.

This is one of the proteins that bind and probably mediate the attachment of the 5S RNA into the large ribosomal subunit, where it forms part of the central protuberance. In the 70S ribosome it contacts protein S13 of the 30S subunit (bridge B1b), connecting the 2 subunits; this bridge is implicated in subunit movement. Contacts the P site tRNA; the 5S rRNA and some of its associated proteins might help stabilize positioning of ribosome-bound tRNAs. This chain is Large ribosomal subunit protein uL5, found in Alkaliphilus oremlandii (strain OhILAs) (Clostridium oremlandii (strain OhILAs)).